The following is a 98-amino-acid chain: MAPKKTTKKGGPKKRPSAEKRIITSQKRCLINQSFKSKAKTMMKKFEAALKAGDQTSIASGLQLVYSVVDKAVKRGILKHNKAARIKSRATLRANAKI.

Over residues 1–15 (MAPKKTTKKGGPKKR) the composition is skewed to basic residues. The interval 1-21 (MAPKKTTKKGGPKKRPSAEKR) is disordered.

The protein belongs to the bacterial ribosomal protein bS20 family.

Its function is as follows. Binds directly to 16S ribosomal RNA. In Chlamydia abortus (strain DSM 27085 / S26/3) (Chlamydophila abortus), this protein is Small ribosomal subunit protein bS20.